The sequence spans 585 residues: Bifunctional lycopene cyclase/phytoene synthase (585 aa).

Positions 1–243 are lycopene beta-cyclase; that stretch reads MGFDYAIVHV…IVFGQLAFDN (243 aa). 7 helical membrane passes run 3 to 23, 35 to 55, 75 to 97, 123 to 141, 151 to 171, 173 to 193, and 221 to 241; these read FDYA…LTLL, KVLF…SYLI, IPLE…YLIL, LAGQ…LRVH, LIVV…YQFI, GLPW…LWLV, and IEEA…QLAF. The segment at 250–585 is phytoene synthase; that stretch reads TFPALFPKPP…AWRTLNKSIA (336 aa).

The protein in the N-terminal section; belongs to the lycopene beta-cyclase family. In the C-terminal section; belongs to the phytoene/squalene synthase family.

The protein resides in the membrane. The catalysed reaction is all-trans-lycopene = gamma-carotene. It carries out the reaction gamma-carotene = all-trans-beta-carotene. The enzyme catalyses 2 (2E,6E,10E)-geranylgeranyl diphosphate = 15-cis-phytoene + 2 diphosphate. Its pathway is carotenoid biosynthesis; beta-carotene biosynthesis. The protein operates within carotenoid biosynthesis; phytoene biosynthesis; all-trans-phytoene from geranylgeranyl diphosphate: step 1/1. Bifunctional enzyme that catalyzes the reactions from geranylgeranyl diphosphate to phytoene (phytoene synthase) and lycopene to beta-carotene via the intermediate gamma-carotene (lycopene cyclase). In Phaeosphaeria nodorum (strain SN15 / ATCC MYA-4574 / FGSC 10173) (Glume blotch fungus), this protein is Bifunctional lycopene cyclase/phytoene synthase.